A 797-amino-acid polypeptide reads, in one-letter code: Protocadherin beta-11 (797 aa).

The N-terminal stretch at 1–26 is a signal peptide; the sequence is MENGGTRTQQIRQVLLLFVLLGMSQA. Residues 27–690 are Extracellular-facing; the sequence is GSETWSFSVA…AQTDFLTVYL (664 aa). 5 Cadherin domains span residues 35–133, 138–242, 247–347, 352–451, and 456–561; these read VAEE…SPIF, MLLE…SPEF, YEVK…APEI, ITSP…APTF, and YTLF…SPFV. Asparagine 418, asparagine 436, asparagine 487, and asparagine 567 each carry an N-linked (GlcNAc...) asparagine glycan. The region spanning 568 to 671 is the Cadherin 6 domain; the sequence is GSAPCTELVP…LVDGFSQPFL (104 aa). Residues 691 to 711 form a helical membrane-spanning segment; it reads VVALASVSSLFFFSVLLFVAV. At 712-797 the chain is on the cytoplasmic side; that stretch reads RLCRRSRAAS…TFQNSFGFNF (86 aa).

The protein localises to the cell membrane. Potential calcium-dependent cell-adhesion protein. May be involved in the establishment and maintenance of specific neuronal connections in the brain. This chain is Protocadherin beta-11 (PCDHB11), found in Pan troglodytes (Chimpanzee).